A 263-amino-acid polypeptide reads, in one-letter code: Sulfur carrier protein FdhD (263 aa).

The active-site Cysteine persulfide intermediate is the cysteine 107.

This sequence belongs to the FdhD family.

Its subcellular location is the cytoplasm. In terms of biological role, required for formate dehydrogenase (FDH) activity. Acts as a sulfur carrier protein that transfers sulfur from IscS to the molybdenum cofactor prior to its insertion into FDH. The protein is Sulfur carrier protein FdhD of Geobacillus kaustophilus (strain HTA426).